A 94-amino-acid polypeptide reads, in one-letter code: Pyrimidine/purine nucleoside phosphorylase (94 aa).

Belongs to the nucleoside phosphorylase PpnP family.

The catalysed reaction is a purine D-ribonucleoside + phosphate = a purine nucleobase + alpha-D-ribose 1-phosphate. It catalyses the reaction adenosine + phosphate = alpha-D-ribose 1-phosphate + adenine. The enzyme catalyses cytidine + phosphate = cytosine + alpha-D-ribose 1-phosphate. It carries out the reaction guanosine + phosphate = alpha-D-ribose 1-phosphate + guanine. The catalysed reaction is inosine + phosphate = alpha-D-ribose 1-phosphate + hypoxanthine. It catalyses the reaction thymidine + phosphate = 2-deoxy-alpha-D-ribose 1-phosphate + thymine. The enzyme catalyses uridine + phosphate = alpha-D-ribose 1-phosphate + uracil. It carries out the reaction xanthosine + phosphate = alpha-D-ribose 1-phosphate + xanthine. Functionally, catalyzes the phosphorolysis of diverse nucleosides, yielding D-ribose 1-phosphate and the respective free bases. Can use uridine, adenosine, guanosine, cytidine, thymidine, inosine and xanthosine as substrates. Also catalyzes the reverse reactions. This Salmonella paratyphi C (strain RKS4594) protein is Pyrimidine/purine nucleoside phosphorylase.